The primary structure comprises 523 residues: Ribonuclease Y (523 aa).

Residues Leu-7 to Tyr-24 traverse the membrane as a helical segment. The region spanning Leu-213–Asp-279 is the KH domain. The region spanning Ala-339–Ala-432 is the HD domain.

It belongs to the RNase Y family.

It is found in the cell membrane. In terms of biological role, endoribonuclease that initiates mRNA decay. The polypeptide is Ribonuclease Y (Wolinella succinogenes (strain ATCC 29543 / DSM 1740 / CCUG 13145 / JCM 31913 / LMG 7466 / NCTC 11488 / FDC 602W) (Vibrio succinogenes)).